Reading from the N-terminus, the 538-residue chain is Phosphoenolpyruvate carboxykinase (ATP) (538 aa).

Substrate-binding residues include Arg-64, Tyr-205, and Lys-211. ATP-binding positions include Lys-211, His-230, and 246 to 254; that span reads GLSGTGKTT. Mn(2+) contacts are provided by Lys-211 and His-230. Position 267 (Asp-267) interacts with Mn(2+). Residues Glu-295, Arg-331, 447–448, and Thr-453 contribute to the ATP site; that span reads RI. A substrate-binding site is contributed by Arg-331.

Belongs to the phosphoenolpyruvate carboxykinase (ATP) family. Monomer. Mn(2+) serves as cofactor.

The protein localises to the cytoplasm. It carries out the reaction oxaloacetate + ATP = phosphoenolpyruvate + ADP + CO2. Its pathway is carbohydrate biosynthesis; gluconeogenesis. Functionally, involved in the gluconeogenesis. Catalyzes the conversion of oxaloacetate (OAA) to phosphoenolpyruvate (PEP) through direct phosphoryl transfer between the nucleoside triphosphate and OAA. The protein is Phosphoenolpyruvate carboxykinase (ATP) of Haemophilus influenzae (strain 86-028NP).